We begin with the raw amino-acid sequence, 309 residues long: Dicarboxylate carrier UCP2 (309 aa).

Residues 1–16 (MVGFKATDVPPTATVK) lie on the Mitochondrial intermembrane side of the membrane. Solcar repeat units lie at residues 11 to 106 (PTAT…VKQF), 114 to 203 (AGIG…IKDT), and 212 to 297 (DDLP…LKRA). Residues 16-63 (KFLGAGTAACIADLITFPLDTAKVRLQIQGESQGLVRTAASAQYRGVL) are important for interaction with long-chain fatty acids. The chain crosses the membrane as a helical span at residues 17–40 (FLGAGTAACIADLITFPLDTAKVR). The Mitochondrial matrix segment spans residues 41–77 (LQIQGESQGLVRTAASAQYRGVLGTILTMVRTEGPRS). Residues 78 to 103 (LYNGLVAGLQRQMSFASVRIGLYDSV) traverse the membrane as a helical segment. Over 104–119 (KQFYTKGSEHAGIGSR) the chain is Mitochondrial intermembrane. The chain crosses the membrane as a helical span at residues 120-145 (LLAGSTTGALAVAVAQPTDVVKVRFQ). Topologically, residues 146 to 173 (AQARAGGGRRYQSTVEAYKTIAREEGIR) are mitochondrial matrix. A helical membrane pass occupies residues 174 to 199 (GLWKGTSPNVARNAIVNCAELVTYDL). At 200 to 217 (IKDTLLKANLMTDDLPCH) the chain is on the mitochondrial intermembrane side. A helical membrane pass occupies residues 218 to 242 (FTSAFGAGFCTTVIASPVDVVKTRY). Over 243 to 268 (MNSALGQYHSAGHCALTMLRKEGPRA) the chain is Mitochondrial matrix. Residues 269-294 (FYKGFMPSFLRLGSWNVVMFVTYEQL) traverse the membrane as a helical segment. The important for interaction with long-chain fatty acids stretch occupies residues 278–285 (LRLGSWNV). Residues 295 to 309 (KRALMAAYQSREAPF) lie on the Mitochondrial intermembrane side of the membrane.

Belongs to the mitochondrial carrier (TC 2.A.29) family. As to quaternary structure, homotetramer. Adopts an asymmetrical dimer of dimers functional form. Interacts with MICU1 (when methylated); leading to decrease the calcium sensitivity of MICU1. As to expression, widely expressed. Highest in spleen, lung, white and brown adipose tissues. 4-6 times higher levels are detected in white adipose tissue of ob/ob and db/db mice when compared to lean littermates. Expressed in neurons of the ventromedial nucleus of the hypothalamus (at protein level). Expressed in thymocytes (at protein level).

It localises to the mitochondrion inner membrane. The catalysed reaction is L-aspartate(out) + phosphate(in) + H(+)(in) = L-aspartate(in) + phosphate(out) + H(+)(out). The enzyme catalyses oxaloacetate(out) + phosphate(in) + H(+)(in) = oxaloacetate(in) + phosphate(out) + H(+)(out). It carries out the reaction (S)-malate(out) + phosphate(in) + H(+)(in) = (S)-malate(in) + phosphate(out) + H(+)(out). It catalyses the reaction malonate(out) + phosphate(in) + H(+)(in) = malonate(in) + phosphate(out) + H(+)(out). The catalysed reaction is sulfate(out) + phosphate(in) + H(+)(in) = sulfate(in) + phosphate(out) + H(+)(out). The enzyme catalyses (S)-malate(out) = (S)-malate(in). It carries out the reaction L-aspartate(out) = L-aspartate(in). It catalyses the reaction phosphate(in) = phosphate(out). The catalysed reaction is chloride(in) = chloride(out). The enzyme catalyses H(+)(in) = H(+)(out). It carries out the reaction a long-chain fatty acid(out) = a long-chain fatty acid(in). With respect to regulation, proton conductance is activated by free long-chain fatty acids and allosterically inhibited by purine nucleotides. Could be constitutively inhibited by GDP. Antiporter that exports dicarboxylate intermediates of the Krebs cycle in exchange for phosphate plus a proton across the inner membrane of mitochondria, a process driven by mitochondrial motive force with an overall impact on glycolysis, glutaminolysis and glutathione-dependent redox balance. Continuous export of oxaloacetate and related four-carbon dicarboxylates from mitochondrial matrix into the cytosol negatively regulates the oxidation of acetyl-CoA substrates via the Krebs cycle lowering the ATP/ADP ratio and reactive oxygen species (ROS) production. May mediate inducible proton entry into the mitochondrial matrix affecting ATP turnover as a protection mechanism against oxidative stress. The proton currents are most likely associated with fatty acid flipping across the inner membrane of mitochondria in a metabolic process regulated by free fatty acids and purine nucleotides. Regulates the use of glucose as a source of energy. Required for glucose-induced DRP1-dependent mitochondrial fission and neuron activation in the ventromedial nucleus of the hypothalamus (VMH). This mitochondrial adaptation mechanism modulates the VMH pool of glucose-excited neurons with an impact on systemic glucose homeostasis. Regulates ROS levels and metabolic reprogramming of macrophages during the resolution phase of inflammation. Attenuates ROS production in response to IL33 to preserve the integrity of the Krebs cycle required for persistent production of itaconate and subsequent GATA3-dependent differentiation of inflammation-resolving alternatively activated macrophages. Can unidirectionally transport anions including L-malate, L-aspartate, phosphate and chloride ions. Does not mediate adaptive thermogenesis. The sequence is that of Dicarboxylate carrier UCP2 (Ucp2) from Mus musculus (Mouse).